Consider the following 1997-residue polypeptide: Protein MOR1 (1997 aa).

HEAT repeat units follow at residues 48–86 (DARL…AADA) and 164–202 (VVPP…WIGK). The tract at residues 236–264 (RKIRSEQEKELEEEVVPEAAGTNNSEEAV) is disordered. HEAT repeat units lie at residues 321–359 (PGDF…GLRT), 362–400 (SGNS…SGCI), and 441–479 (LKLH…MVGM). The segment at 501–576 (IGSASDTTSG…DGGPQSKASA (76 aa)) is disordered. A compositionally biased stretch (polar residues) spans 504-520 (ASDTTSGTVAASNTGVG). Residues 529–539 (SSSMRRSAASM) are compositionally biased toward low complexity. 4 HEAT repeats span residues 848-886 (EDIS…EAHK), 890-928 (PTGT…AMGP), 931-969 (EKSS…AAQL), and 1007-1045 (PSEA…ICGQ). The disordered stretch occupies residues 1087–1115 (MSLPSKAGSKNNKHGPNDRGSNVSKAVSQ). HEAT repeat units follow at residues 1233–1259 (TTCL…MLTE), 1260–1294 (AEAA…MVNI), 1295–1332 (YSLP…HHGT), and 1334–1372 (VSGL…NLGD). Residues 1400-1410 (MDKRREGRPGD) are compositionally biased toward basic and acidic residues. The interval 1400–1436 (MDKRREGRPGDARAALRRSVRENGSDIAEQSGEAVSR) is disordered. The stretch at 1539-1579 (RSCKYVLNTLMQTFQIKRLAHAVKEGTLDNLITELLLWLLD) is one HEAT 14 repeat. Residues 1755–1776 (MGQTHWGDAGSNNPNPSTHSTD) are disordered. The segment covering 1764-1776 (GSNNPNPSTHSTD) has biased composition (polar residues).

The protein belongs to the TOG/XMAP215 family.

The protein resides in the cytoplasm. The protein localises to the cytoskeleton. Microtubule-associated protein that is essential for cortical microtubules organization and function. This Oryza sativa subsp. japonica (Rice) protein is Protein MOR1 (MOR1).